Reading from the N-terminus, the 267-residue chain is Tryptophan synthase alpha chain (267 aa).

Residues Glu49 and Asp60 each act as proton acceptor in the active site.

Belongs to the TrpA family. As to quaternary structure, tetramer of two alpha and two beta chains.

The enzyme catalyses (1S,2R)-1-C-(indol-3-yl)glycerol 3-phosphate + L-serine = D-glyceraldehyde 3-phosphate + L-tryptophan + H2O. Its pathway is amino-acid biosynthesis; L-tryptophan biosynthesis; L-tryptophan from chorismate: step 5/5. Its function is as follows. The alpha subunit is responsible for the aldol cleavage of indoleglycerol phosphate to indole and glyceraldehyde 3-phosphate. In Carboxydothermus hydrogenoformans (strain ATCC BAA-161 / DSM 6008 / Z-2901), this protein is Tryptophan synthase alpha chain.